We begin with the raw amino-acid sequence, 1214 residues long: Delta-latroinsectotoxin-Lt1a (1214 aa).

Positions 64-89 (IGSIPVIGEVVGIVTAPIAIVSHITS) are helix H2 is the probable transmembrane region of the tetrameric pore inserted in the target cell membrane. The segment at 250–269 (ALYALFYGTQTYAAVMFFLL) is helix H8 is the probable transmembrane region of the tetrameric pore inserted in the target cell membrane. ANK repeat units lie at residues 464 to 497 (DIHR…DIEA), 501 to 532 (NDRS…DIEL), 536 to 565 (NGFT…DVNA), 570 to 600 (TNLT…KVNE), 604 to 633 (DGFT…DKNA), 637 to 666 (SGLT…DLNI), 670 to 699 (NHMA…KVSI), 706 to 734 (NNWT…DINL), 740 to 769 (GNLT…NIEE), 773 to 802 (EGYT…DIEA), 806 to 835 (DNLT…DIGA), 839 to 868 (DGST…NLKE), 872 to 901 (NKYL…SLKD), 906 to 936 (EGRT…TLDE), and 966 to 994 (VKPT…PEGS). The propeptide at 1020–1214 (IVKETNSRYL…IDVHQKMFLR (195 aa)) is C-terminal domain cleavage is required for toxin activation.

It belongs to the cationic peptide 01 (latrotoxin) family. 04 (delta-latroinsectotoxin) subfamily. In terms of assembly, homotetramer in membrane. As to expression, expressed by the venom gland.

The protein resides in the secreted. It localises to the target cell membrane. Its function is as follows. Insecticidal presynaptic neurotoxin that induces massive neurotransmitter release at insect (but not vertebrate) neuromuscular junctions. Native toxin forms cation-permeable pores (with high permeability to calcium) in lipid membranes locust muscle membrane and artificial lipid bilayers. May bind to insect neurexin-1 homolog, insect adhesion G protein-coupled receptor L1 homolog, and insect receptor-type tyrosine-protein phosphatase S homolog, and induces neurotransmitter exocytosis both by forming tetrameric pores in membranes and signaling via G protein-coupled receptor. Oligomerization is a process independent of divalent cations. The polypeptide is Delta-latroinsectotoxin-Lt1a (Latrodectus tredecimguttatus (Mediterranean black widow spider)).